Consider the following 493-residue polypeptide: Malonyl-CoA decarboxylase, mitochondrial (493 aa).

Residues 1–39 (MRGFGPGLTARRLLPLRLPPRPPGPRLASGQAAGALERA) constitute a mitochondrion transit peptide. Residues 40–190 (MDELLRRAVP…VLKGMLSEWF (151 aa)) form an alpha-helical domain region. Lys-59 bears the N6-acetyllysine mark. At Lys-168 the chain carries N6-acetyllysine; alternate. Lys-168 bears the N6-succinyllysine; alternate mark. Positions 191-493 (SSGFLNLERV…VAQFQKNSKL (303 aa)) are catalytic domain. Lys-211 bears the N6-acetyllysine mark. Position 222 is an N6-succinyllysine (Lys-222). Residues 299 to 305 (QGVELGT) and Ser-329 contribute to the malonyl-CoA site. Ser-329 functions as the Proton acceptor in the catalytic mechanism. An N6-acetyllysine modification is found at Lys-389. Position 423 (His-423) interacts with malonyl-CoA. His-423 serves as the catalytic Proton donor. N6-acetyllysine is present on Lys-472. The Microbody targeting signal signature appears at 491 to 493 (SKL).

Homotetramer. Dimer of dimers. The two subunits within a dimer display conformational differences suggesting that at any given moment, only one of the two subunits is competent for malonyl-CoA binding and catalytic activity. Under oxidizing conditions, can form disulfide-linked homotetramers (in vitro). Associates with the peroxisomal targeting signal receptor PEX5. In terms of processing, acetylation at Lys-472 activates malonyl-CoA decarboxylase activity. Deacetylation at Lys-472 by SIRT4 represses activity, leading to promote lipogenesis. Interchain disulfide bonds may form in peroxisomes (Potential). Interchain disulfide bonds are not expected to form in the reducing environment of the cytoplasm and mitochondria. Expressed in fibroblasts and hepatoblastoma cells (at protein level). Expressed strongly in heart, liver, skeletal muscle, kidney and pancreas. Expressed in myotubes. Expressed weakly in brain, placenta, spleen, thymus, testis, ovary and small intestine.

The protein resides in the cytoplasm. The protein localises to the mitochondrion matrix. Its subcellular location is the peroxisome. It localises to the peroxisome matrix. It carries out the reaction malonyl-CoA + H(+) = acetyl-CoA + CO2. It participates in metabolic intermediate biosynthesis; acetyl-CoA biosynthesis; acetyl-CoA from malonyl-CoA: step 1/1. Malonyl-CoA decarboxylase activity does not require any cofactors or divalent metal ions. Formation of interchain disulfide bonds leads to positive cooperativity between active sites and increases the affinity for malonyl-CoA and the catalytic efficiency (in vitro). Catalyzes the conversion of malonyl-CoA to acetyl-CoA. In the fatty acid biosynthesis MCD selectively removes malonyl-CoA and thus assures that methyl-malonyl-CoA is the only chain elongating substrate for fatty acid synthase and that fatty acids with multiple methyl side chains are produced. In peroxisomes it may be involved in degrading intraperoxisomal malonyl-CoA, which is generated by the peroxisomal beta-oxidation of odd chain-length dicarboxylic fatty acids. Plays a role in the metabolic balance between glucose and lipid oxidation in muscle independent of alterations in insulin signaling. May play a role in controlling the extent of ischemic injury by promoting glucose oxidation. This is Malonyl-CoA decarboxylase, mitochondrial from Homo sapiens (Human).